Here is a 609-residue protein sequence, read N- to C-terminus: 1-deoxy-D-xylulose-5-phosphate synthase (609 aa).

Thiamine diphosphate is bound by residues His77 and 118–120; that span reads GHS. Asp149 contributes to the Mg(2+) binding site. Residues 150–151, Asn178, Tyr259, and Glu342 contribute to the thiamine diphosphate site; that span reads GA. Residue Asn178 participates in Mg(2+) binding.

The protein belongs to the transketolase family. DXPS subfamily. Homodimer. Requires Mg(2+) as cofactor. The cofactor is thiamine diphosphate.

The catalysed reaction is D-glyceraldehyde 3-phosphate + pyruvate + H(+) = 1-deoxy-D-xylulose 5-phosphate + CO2. Its pathway is metabolic intermediate biosynthesis; 1-deoxy-D-xylulose 5-phosphate biosynthesis; 1-deoxy-D-xylulose 5-phosphate from D-glyceraldehyde 3-phosphate and pyruvate: step 1/1. Catalyzes the acyloin condensation reaction between C atoms 2 and 3 of pyruvate and glyceraldehyde 3-phosphate to yield 1-deoxy-D-xylulose-5-phosphate (DXP). This Listeria monocytogenes serotype 4b (strain CLIP80459) protein is 1-deoxy-D-xylulose-5-phosphate synthase.